Here is a 569-residue protein sequence, read N- to C-terminus: Pyruvate decarboxylase (569 aa).

2 residues coordinate pyruvate: Asp-38 and His-124. Residues Thr-398 and 421-423 (GSI) each bind thiamine diphosphate. Asp-451 contacts Mg(2+). Thiamine diphosphate is bound by residues 452–453 (GS) and 478–483 (NQGYTI). Mg(2+) contacts are provided by Asn-478 and Gly-480. A pyruvate-binding site is contributed by Glu-484.

It belongs to the TPP enzyme family. In terms of assembly, homotetramer. Mg(2+) is required as a cofactor. The cofactor is thiamine diphosphate.

The catalysed reaction is a 2-oxocarboxylate + H(+) = an aldehyde + CO2. The enzyme catalyses pyruvate + H(+) = acetaldehyde + CO2. The polypeptide is Pyruvate decarboxylase (pdcA) (Aspergillus terreus (strain NIH 2624 / FGSC A1156)).